Here is an 85-residue protein sequence, read N- to C-terminus: Large ribosomal subunit protein bL27 (85 aa).

Positions 1–22 are disordered; the sequence is MAHKKGQGSTQNNRDSAGRRLG.

It belongs to the bacterial ribosomal protein bL27 family.

This is Large ribosomal subunit protein bL27 from Sulfurimonas denitrificans (strain ATCC 33889 / DSM 1251) (Thiomicrospira denitrificans (strain ATCC 33889 / DSM 1251)).